Here is a 2556-residue protein sequence, read N- to C-terminus: Non-reducing polyketide synthase tazA (2556 aa).

The N-terminal acylcarrier protein transacylase domain (SAT) stretch occupies residues Leu16 to His270. Residue Cys143 is the Nucleophile; for transacylase activity of the active site. The active-site Proton donor/acceptor; for transacylase activity is the His270. In terms of domain architecture, Ketosynthase family 3 (KS3) spans Glu397–Gln769. The malonyl-CoA:ACP transacylase (MAT) domain stretch occupies residues Cys876 to Ala1209. The tract at residues Tyr1254 to Glu1383 is N-terminal hotdog fold. The PKS/mFAS DH domain occupies Tyr1254–Ser1560. The interval Val1257–Thr1564 is product template (PT) domain. The Proton acceptor; for dehydratase activity role is filled by His1285. Residues Asp1408–Ser1560 are C-terminal hotdog fold. Residue Asp1465 is the Proton donor; for dehydratase activity of the active site. The tract at residues Thr1567–Lys1621 is disordered. Polar residues predominate over residues Asp1577–Glu1593. The Carrier domain occupies Ser1620–Leu1694. Ser1654 is modified (O-(pantetheine 4'-phosphoryl)serine). Residues Ser1700–Asp1731 form a disordered region. Residues Ala1702–Asp1731 show a composition bias toward polar residues. The tract at residues Leu1830 to Asn2107 is methyltransferase domain. Residues Val2180 to Thr2424 form an NADPH-binding (R) domain region.

Requires pantetheine 4'-phosphate as cofactor.

It participates in secondary metabolite biosynthesis. Functionally, non-reducing polyketide synthase; part of the gene cluster that mediates the biosynthesis of azaterrilone A and other azaphilones, a class of fungal metabolites characterized by a highly oxygenated pyrano-quinone bicyclic core and exhibiting a broad range of bioactivities. The first step of the pathway begins with tazA that assembles one acetyl-CoA starter unit, five malonyl-CoA units, and catalyzes a series of Claisen condensations, methylation, PT-mediated cyclization, and finally releases the first hexaketide precursor through the R-domain. The tazA product then undergoes reduction on its terminal ketone and the following pyran-ring formation by yet undetermined enzyme(s). Dehydration and enoyl reduction, possibly involving the trans-enoyl reductase tazE leads to the next intermediate. TazD is predicted as an acetyltransferase and might catalyze the acetylation steps leading to the synthesis of azaterrilone A. Azaterrilone A is not the final product of the taz pathway and both the highly reducing polyketide synthase tazB and the dual enzyme tazHJ catalyze late steps of the pathway, leading to the production of the 2 final stereoisomers that contain additional polyketide modification whose structures have still to be determined. This is Non-reducing polyketide synthase tazA from Aspergillus terreus (strain NIH 2624 / FGSC A1156).